Reading from the N-terminus, the 412-residue chain is [Pyruvate dehydrogenase (acetyl-transferring)] kinase isozyme 4, mitochondrial (412 aa).

The region spanning 138-368 (ILEYKDNCTV…DAIIYLKALS (231 aa)) is the Histidine kinase domain. ATP-binding positions include 254 to 261 (ELFKNAMR), Asp-293, 312 to 313 (ST), and 329 to 334 (GFGYGL).

This sequence belongs to the PDK/BCKDK protein kinase family. In terms of assembly, homodimer. Interacts with the pyruvate dehydrogenase complex subunit DLAT, and is part of the multimeric pyruvate dehydrogenase complex that contains multiple copies of pyruvate dehydrogenase (E1), dihydrolipoamide acetyltransferase (DLAT, E2) and lipoamide dehydrogenase (DLD, E3). In terms of tissue distribution, ubiquitous; highest levels of expression in heart and skeletal muscle.

It localises to the mitochondrion matrix. It catalyses the reaction L-seryl-[pyruvate dehydrogenase E1 alpha subunit] + ATP = O-phospho-L-seryl-[pyruvate dehydrogenase E1 alpha subunit] + ADP + H(+). Its function is as follows. Kinase that plays a key role in regulation of glucose and fatty acid metabolism and homeostasis via phosphorylation of the pyruvate dehydrogenase subunits PDHA1 and PDHA2. This inhibits pyruvate dehydrogenase activity, and thereby regulates metabolite flux through the tricarboxylic acid cycle, down-regulates aerobic respiration and inhibits the formation of acetyl-coenzyme A from pyruvate. Inhibition of pyruvate dehydrogenase decreases glucose utilization and increases fat metabolism in response to prolonged fasting and starvation. Plays an important role in maintaining normal blood glucose levels under starvation, and is involved in the insulin signaling cascade. Via its regulation of pyruvate dehydrogenase activity, plays an important role in maintaining normal blood pH and in preventing the accumulation of ketone bodies under starvation. In the fed state, mediates cellular responses to glucose levels and to a high-fat diet. Regulates both fatty acid oxidation and de novo fatty acid biosynthesis. Plays a role in the generation of reactive oxygen species. Protects detached epithelial cells against anoikis. Plays a role in cell proliferation via its role in regulating carbohydrate and fatty acid metabolism. In Rattus norvegicus (Rat), this protein is [Pyruvate dehydrogenase (acetyl-transferring)] kinase isozyme 4, mitochondrial (Pdk4).